The chain runs to 373 residues: tRNA-specific 2-thiouridylase MnmA (373 aa).

ATP is bound by residues 12 to 19 (GMSGGVDS) and M38. Positions 98-100 (NPD) are interaction with target base in tRNA. The active-site Nucleophile is the C103. C103 and C200 form a disulfide bridge. G127 contributes to the ATP binding site. An interaction with tRNA region spans residues 150-152 (KDQ). C200 acts as the Cysteine persulfide intermediate in catalysis. Residues 312 to 313 (RY) are interaction with tRNA.

This sequence belongs to the MnmA/TRMU family.

The protein localises to the cytoplasm. The enzyme catalyses S-sulfanyl-L-cysteinyl-[protein] + uridine(34) in tRNA + AH2 + ATP = 2-thiouridine(34) in tRNA + L-cysteinyl-[protein] + A + AMP + diphosphate + H(+). Its function is as follows. Catalyzes the 2-thiolation of uridine at the wobble position (U34) of tRNA, leading to the formation of s(2)U34. This Streptococcus thermophilus (strain CNRZ 1066) protein is tRNA-specific 2-thiouridylase MnmA.